The following is a 207-amino-acid chain: Guanylate kinase (207 aa).

One can recognise a Guanylate kinase-like domain in the interval 3-181; it reads GLLFVVSAAS…ALHDLESVIT (179 aa). Residue 10 to 17 coordinates ATP; sequence AASGTGKT.

This sequence belongs to the guanylate kinase family.

Its subcellular location is the cytoplasm. The catalysed reaction is GMP + ATP = GDP + ADP. Its function is as follows. Essential for recycling GMP and indirectly, cGMP. The sequence is that of Guanylate kinase from Acinetobacter baylyi (strain ATCC 33305 / BD413 / ADP1).